Here is a 237-residue protein sequence, read N- to C-terminus: MGAFTGKTVLILGGSRGIGAAIVRRFVTDGANVRFTYAGSKDAAKRLAQETGATAVFTDSADRDAVIDVVRKSGALDILVVNAGIGVFGEALELNADDIDRLFKINIHAPYHASVEAARQMPEGGRILIIGSVNGDRMPVAGMAAYAASKSALQGMARGLARDFGPRGITINVVQPGPIDTDANPANGPMRDMLHSLMAIKRHGQPEEVAGMVAWLAGPEASFVTGAMHTIDGAFGA.

10 to 34 contacts NAD(+); that stretch reads LILGGSRGIGAAIVRRFVTDGANVR. A substrate-binding site is contributed by serine 132. Tyrosine 146 serves as the catalytic Proton acceptor.

The protein belongs to the short-chain dehydrogenases/reductases (SDR) family.

Its function is as follows. Increases biofilm dispersal. Acts by binding directly to the signaling molecule cyclic-di-GMP, which decreases the intracellular concentration of cyclic-di-GMP and leads to biofilm dispersal. Also controls other biofilm-related phenotypes such as cell motility, cell size, cell aggregation and production of extracellular DNA and extracellular polysaccharides (EPS). Does not act as a phosphodiesterase. The protein is Cyclic-di-GMP-binding biofilm dispersal mediator protein (bdcA) of Escherichia coli (strain K12).